The sequence spans 211 residues: ATP phosphoribosyltransferase (211 aa).

This sequence belongs to the ATP phosphoribosyltransferase family. Short subfamily. Heteromultimer composed of HisG and HisZ subunits.

The protein localises to the cytoplasm. It carries out the reaction 1-(5-phospho-beta-D-ribosyl)-ATP + diphosphate = 5-phospho-alpha-D-ribose 1-diphosphate + ATP. The protein operates within amino-acid biosynthesis; L-histidine biosynthesis; L-histidine from 5-phospho-alpha-D-ribose 1-diphosphate: step 1/9. Functionally, catalyzes the condensation of ATP and 5-phosphoribose 1-diphosphate to form N'-(5'-phosphoribosyl)-ATP (PR-ATP). Has a crucial role in the pathway because the rate of histidine biosynthesis seems to be controlled primarily by regulation of HisG enzymatic activity. This Ectopseudomonas mendocina (strain ymp) (Pseudomonas mendocina) protein is ATP phosphoribosyltransferase.